A 45-amino-acid chain; its full sequence is Large ribosomal subunit protein bL34 (45 aa).

The span at 1 to 10 (MTQRTLGGTN) shows a compositional bias: polar residues. The disordered stretch occupies residues 1 to 45 (MTQRTLGGTNRKQKRTSGFRARMRTHNGRKVIQARRSKGRHRLAV). Basic residues predominate over residues 11 to 45 (RKQKRTSGFRARMRTHNGRKVIQARRSKGRHRLAV).

The protein belongs to the bacterial ribosomal protein bL34 family.

This Synechocystis sp. (strain ATCC 27184 / PCC 6803 / Kazusa) protein is Large ribosomal subunit protein bL34 (rpmH).